The sequence spans 605 residues: Protein cueball (605 aa).

A signal peptide spans 1–31 (MAYIDQKHNTFWDDFAIALRDKIVFLNSTWG). 3 N-linked (GlcNAc...) asparagine glycosylation sites follow: Asn27, Asn64, and Asn85. Residues 32–486 (EIHASAHRFE…QCGPAPPVQG (455 aa)) are Extracellular-facing. LDL-receptor class B repeat units lie at residues 53-97 (EMIY…DPLN), 98-145 (RNLF…DICR), 146-190 (RQLY…DQLS), and 191-236 (DRIF…NEDA). N-linked (GlcNAc...) asparagine glycosylation is found at Asn261 and Asn314. EGF-like domains follow at residues 322–359 (EGDR…ARCE) and 394–431 (EYHK…ERCE). Intrachain disulfides connect Cys334–Cys347, Cys349–Cys358, Cys398–Cys408, Cys402–Cys419, and Cys421–Cys430. Asn433 and Asn464 each carry an N-linked (GlcNAc...) asparagine glycan. Residues 487-507 (PLIIVIVLGLVTTSGLVALTV) form a helical membrane-spanning segment. Over 508–605 (HGVRLIYKPK…IHSMEDNLLS (98 aa)) the chain is Cytoplasmic.

This sequence belongs to the cueball family.

Its subcellular location is the cell membrane. Its function is as follows. Has a role in spermatogenesis and oogenesis. This chain is Protein cueball, found in Drosophila grimshawi (Hawaiian fruit fly).